Consider the following 188-residue polypeptide: Large ribosomal subunit protein eL18 (188 aa).

Positions 153 to 188 (GKAPGTPHSHTKPYIRSKGRKFERARGRRASRGYKN) are disordered. Basic residues-rich tracts occupy residues 161–171 (SHTKPYIRSKG) and 178–188 (RGRRASRGYKN).

Belongs to the eukaryotic ribosomal protein eL18 family. In terms of assembly, component of the large ribosomal subunit.

The protein localises to the cytoplasm. The protein resides in the cytosol. It is found in the rough endoplasmic reticulum. In terms of biological role, component of the large ribosomal subunit. The ribosome is a large ribonucleoprotein complex responsible for the synthesis of proteins in the cell. This Ictalurus punctatus (Channel catfish) protein is Large ribosomal subunit protein eL18 (rpl18).